The primary structure comprises 173 residues: Ribosome maturation factor RimM (173 aa).

One can recognise a PRC barrel domain in the interval 93 to 166 (EDEYLVSDMI…KMLVDTIEGM (74 aa)).

It belongs to the RimM family. In terms of assembly, binds ribosomal protein uS19.

The protein localises to the cytoplasm. Functionally, an accessory protein needed during the final step in the assembly of 30S ribosomal subunit, possibly for assembly of the head region. Essential for efficient processing of 16S rRNA. May be needed both before and after RbfA during the maturation of 16S rRNA. It has affinity for free ribosomal 30S subunits but not for 70S ribosomes. The protein is Ribosome maturation factor RimM of Fusobacterium nucleatum subsp. nucleatum (strain ATCC 25586 / DSM 15643 / BCRC 10681 / CIP 101130 / JCM 8532 / KCTC 2640 / LMG 13131 / VPI 4355).